The primary structure comprises 309 residues: Foldase protein PrsA (309 aa).

A signal peptide spans 1 to 22 (MKTRSKLAAGFLTLMSVATLAA). Cys23 carries N-palmitoyl cysteine lipidation. Residue Cys23 is the site of S-diacylglycerol cysteine attachment. One can recognise a PpiC domain in the interval 146 to 241 (TPETSVQVIK…TSYYIIKVTD (96 aa)).

Belongs to the PrsA family.

The protein localises to the cell membrane. The catalysed reaction is [protein]-peptidylproline (omega=180) = [protein]-peptidylproline (omega=0). Plays a major role in protein secretion by helping the post-translocational extracellular folding of several secreted proteins. The chain is Foldase protein PrsA from Streptococcus agalactiae serotype III (strain NEM316).